Here is a 447-residue protein sequence, read N- to C-terminus: Glucose-6-phosphate isomerase (447 aa).

The active-site Proton donor is the glutamate 289. Catalysis depends on residues histidine 310 and lysine 424.

Belongs to the GPI family.

Its subcellular location is the cytoplasm. It catalyses the reaction alpha-D-glucose 6-phosphate = beta-D-fructose 6-phosphate. Its pathway is carbohydrate biosynthesis; gluconeogenesis. The protein operates within carbohydrate degradation; glycolysis; D-glyceraldehyde 3-phosphate and glycerone phosphate from D-glucose: step 2/4. In terms of biological role, catalyzes the reversible isomerization of glucose-6-phosphate to fructose-6-phosphate. The sequence is that of Glucose-6-phosphate isomerase from Parabacteroides distasonis (strain ATCC 8503 / DSM 20701 / CIP 104284 / JCM 5825 / NCTC 11152).